A 317-amino-acid polypeptide reads, in one-letter code: UDP-3-O-acylglucosamine N-acyltransferase (317 aa).

His-229 functions as the Proton acceptor in the catalytic mechanism.

This sequence belongs to the transferase hexapeptide repeat family. LpxD subfamily. Homotrimer.

The catalysed reaction is a UDP-3-O-[(3R)-3-hydroxyacyl]-alpha-D-glucosamine + a (3R)-hydroxyacyl-[ACP] = a UDP-2-N,3-O-bis[(3R)-3-hydroxyacyl]-alpha-D-glucosamine + holo-[ACP] + H(+). Its pathway is bacterial outer membrane biogenesis; LPS lipid A biosynthesis. Functionally, catalyzes the N-acylation of UDP-3-O-acylglucosamine using 3-hydroxyacyl-ACP as the acyl donor. Is involved in the biosynthesis of lipid A, a phosphorylated glycolipid that anchors the lipopolysaccharide to the outer membrane of the cell. The protein is UDP-3-O-acylglucosamine N-acyltransferase of Campylobacter curvus (strain 525.92).